A 631-amino-acid chain; its full sequence is Anthrax toxin receptor-like (631 aa).

Residues 1 to 27 (MGSHESLGPYFLVFLLLLLLPPPLFRA) form the signal peptide. At 28–353 (GSLRYHGPDW…TSTTCGIFRN (326 aa)) the chain is on the extracellular side. One can recognise a VWFA domain in the interval 76–246 (DLYFILDKSG…KALRSTIDAL (171 aa)). The a divalent metal cation site is built by Ser-84, Ser-86, and Thr-150. The helical transmembrane segment at 354–374 (WLYFVPLLLLVPLLLCCVWRL) threads the bilayer. The Cytoplasmic portion of the chain corresponds to 375–631 (CRKQTVKEPP…LSLPPSEPNF (257 aa)). The disordered stretch occupies residues 382–413 (EPPPVQKPEKEPEQEKPPSPPPPPPPPPPPLP). The span at 388–397 (KPEKEPEQEK) shows a compositional bias: basic and acidic residues. Residues 398-413 (PPSPPPPPPPPPPPLP) are compositionally biased toward pro residues.

This sequence belongs to the ATR family.

The protein localises to the membrane. The sequence is that of Anthrax toxin receptor-like (ANTXRL) from Homo sapiens (Human).